The primary structure comprises 264 residues: Transcription factor bHLH52 (264 aa).

Positions 134-183 (RELSAQSIAARKRRRRITEKTQELGKLIPGSQKHNTAEMFNAAAKYVKFL) constitute a bHLH domain.

In terms of assembly, homodimer. In terms of tissue distribution, expressed constitutively in roots, leaves, stems, and flowers.

Its subcellular location is the nucleus. The sequence is that of Transcription factor bHLH52 (BHLH52) from Arabidopsis thaliana (Mouse-ear cress).